A 207-amino-acid chain; its full sequence is Ribosomal RNA small subunit methyltransferase G (207 aa).

Residues Gly-73, Leu-78, 124-125 (VE), and Arg-139 contribute to the S-adenosyl-L-methionine site.

The protein belongs to the methyltransferase superfamily. RNA methyltransferase RsmG family.

The protein resides in the cytoplasm. It catalyses the reaction guanosine(527) in 16S rRNA + S-adenosyl-L-methionine = N(7)-methylguanosine(527) in 16S rRNA + S-adenosyl-L-homocysteine. In terms of biological role, specifically methylates the N7 position of guanine in position 527 of 16S rRNA. The sequence is that of Ribosomal RNA small subunit methyltransferase G from Salmonella arizonae (strain ATCC BAA-731 / CDC346-86 / RSK2980).